The primary structure comprises 38 residues: Antimicrobial peptide 1 (38 aa).

In terms of processing, disulfide bonds. As to expression, expressed in flowers but not in leaves, seeds or roots (at protein level).

Antimicrobial peptide. Active against fungal species B.cinerea (IC(50)=5.8 uM) and A.niger (IC(50)=5.6 uM) but not against F.oxysporum, F.graminearum, B.sorokinina and P.debaryanum at concentrations below 10 uM. Active against bacterial species P.syringae, B.subtilis and X.campestris. This is Antimicrobial peptide 1 from Taraxacum officinale (Common dandelion).